The primary structure comprises 93 residues: MKFAVILLFSLVVLAVASESVEEVRREIDIEDLPEQQRGCADLRQPCTEGDDCSCCGSEGVCNCSHPHKKGCYCKTAGLLEKLAKKFKGCKNK.

An N-terminal signal peptide occupies residues 1–18 (MKFAVILLFSLVVLAVAS). A propeptide spanning residues 19–38 (ESVEEVRREIDIEDLPEQQR) is cleaved from the precursor.

It belongs to the neurotoxin 31 family. Contains 5 disulfide bonds. In terms of tissue distribution, expressed by the venom gland.

The protein localises to the secreted. This chain is U12-lycotoxin-Ls1d, found in Lycosa singoriensis (Wolf spider).